Consider the following 226-residue polypeptide: ATP synthase subunit a (226 aa).

Helical transmembrane passes span 17 to 37 (FNYL…AKLA), 79 to 99 (LVAT…IPGF), 105 to 125 (SLNL…FEGI), 168 to 188 (FGNI…APWV), and 200 to 222 (MALL…AVVV).

This sequence belongs to the ATPase A chain family. As to quaternary structure, F-type ATPases have 2 components, CF(1) - the catalytic core - and CF(0) - the membrane proton channel. CF(1) has five subunits: alpha(3), beta(3), gamma(1), delta(1), epsilon(1). CF(0) has three main subunits: a(1), b(2) and c(9-12). The alpha and beta chains form an alternating ring which encloses part of the gamma chain. CF(1) is attached to CF(0) by a central stalk formed by the gamma and epsilon chains, while a peripheral stalk is formed by the delta and b chains.

It is found in the cell inner membrane. Functionally, key component of the proton channel; it plays a direct role in the translocation of protons across the membrane. This is ATP synthase subunit a from Campylobacter fetus subsp. fetus (strain 82-40).